We begin with the raw amino-acid sequence, 459 residues long: Bifunctional protein GlmU (459 aa).

Positions 1 to 230 (MSNRFAVILA…FDETLGVNDR (230 aa)) are pyrophosphorylase. Residues 9 to 12 (LAAG), K23, Q73, and 78 to 79 (GT) each bind UDP-N-acetyl-alpha-D-glucosamine. D103 serves as a coordination point for Mg(2+). Residues G140, E155, N170, and N228 each coordinate UDP-N-acetyl-alpha-D-glucosamine. N228 contributes to the Mg(2+) binding site. Residues 231-251 (VALSQAEIIMKNRINRKNMVN) are linker. An N-acetyltransferase region spans residues 252–459 (GVTIIDPSNT…VDQLLNKKKS (208 aa)). The UDP-N-acetyl-alpha-D-glucosamine site is built by R333 and K351. H363 (proton acceptor) is an active-site residue. UDP-N-acetyl-alpha-D-glucosamine contacts are provided by Y366 and N377. Residues 386–387 (NY), A423, and R440 each bind acetyl-CoA.

It in the N-terminal section; belongs to the N-acetylglucosamine-1-phosphate uridyltransferase family. The protein in the C-terminal section; belongs to the transferase hexapeptide repeat family. Homotrimer. Mg(2+) serves as cofactor.

The protein localises to the cytoplasm. It catalyses the reaction alpha-D-glucosamine 1-phosphate + acetyl-CoA = N-acetyl-alpha-D-glucosamine 1-phosphate + CoA + H(+). The catalysed reaction is N-acetyl-alpha-D-glucosamine 1-phosphate + UTP + H(+) = UDP-N-acetyl-alpha-D-glucosamine + diphosphate. It functions in the pathway nucleotide-sugar biosynthesis; UDP-N-acetyl-alpha-D-glucosamine biosynthesis; N-acetyl-alpha-D-glucosamine 1-phosphate from alpha-D-glucosamine 6-phosphate (route II): step 2/2. Its pathway is nucleotide-sugar biosynthesis; UDP-N-acetyl-alpha-D-glucosamine biosynthesis; UDP-N-acetyl-alpha-D-glucosamine from N-acetyl-alpha-D-glucosamine 1-phosphate: step 1/1. The protein operates within bacterial outer membrane biogenesis; LPS lipid A biosynthesis. In terms of biological role, catalyzes the last two sequential reactions in the de novo biosynthetic pathway for UDP-N-acetylglucosamine (UDP-GlcNAc). The C-terminal domain catalyzes the transfer of acetyl group from acetyl coenzyme A to glucosamine-1-phosphate (GlcN-1-P) to produce N-acetylglucosamine-1-phosphate (GlcNAc-1-P), which is converted into UDP-GlcNAc by the transfer of uridine 5-monophosphate (from uridine 5-triphosphate), a reaction catalyzed by the N-terminal domain. The protein is Bifunctional protein GlmU of Bacillus mycoides (strain KBAB4) (Bacillus weihenstephanensis).